Reading from the N-terminus, the 256-residue chain is Hemin import ATP-binding protein HmuV (256 aa).

In terms of domain architecture, ABC transporter spans 2–238 (ISAQNLVYSL…QALTMLYGAD (237 aa)). An ATP-binding site is contributed by 34–41 (GPNGAGKS).

Belongs to the ABC transporter superfamily. Heme (hemin) importer (TC 3.A.1.14.5) family. In terms of assembly, the complex is composed of two ATP-binding proteins (HmuV), two transmembrane proteins (HmuU) and a solute-binding protein (HmuT).

It is found in the cell inner membrane. In terms of biological role, part of the ABC transporter complex HmuTUV involved in hemin import. Responsible for energy coupling to the transport system. The chain is Hemin import ATP-binding protein HmuV from Shigella dysenteriae serotype 1 (strain Sd197).